The primary structure comprises 695 residues: Variediene synthase (695 aa).

The segment at 1 to 23 is disordered; the sequence is MVPTSLSPDDTSDPVPRSSSDIQ. A terpene cyclase region spans residues 7 to 332; it reads SPDDTSDPVP…PRYHPWLCEE (326 aa). Residue D98 coordinates Mg(2+). Substrate-binding positions include D98, 184–187, N228, 232–236, and 324–325; these read RIID, SFDIE, and RY. The short motif at 98-102 is the DDXXD 1 element; sequence DNVVE. Residues 228 to 236 carry the NSE/DTE motif; that stretch reads NDYFSFDIE. Residues 353–392 are disordered; sequence RRSISGDSISSESSVWSGASDRSARSSVSSAPSLDEGKEP. The segment covering 357-385 has biased composition (low complexity); that stretch reads SGDSISSESSVWSGASDRSARSSVSSAPS. Isopentenyl diphosphate-binding residues include K415, R418, and H447. D454 and D458 together coordinate Mg(2+). Residues 454–458 carry the DDXXD 2 motif; sequence DDIED. R463 is a binding site for dimethylallyl diphosphate. Residue R464 coordinates isopentenyl diphosphate. Residues K541, T542, Q579, N586, K595, and K605 each coordinate dimethylallyl diphosphate.

The protein in the N-terminal section; belongs to the terpene synthase family. It in the C-terminal section; belongs to the FPP/GGPP synthase family. Hexamer. Requires Mg(2+) as cofactor.

It carries out the reaction isopentenyl diphosphate + (2E,6E)-farnesyl diphosphate = (2E,6E,10E)-geranylgeranyl diphosphate + diphosphate. The catalysed reaction is (2E,6E,10E)-geranylgeranyl diphosphate = variediene + diphosphate. The protein operates within secondary metabolite biosynthesis; terpenoid biosynthesis. Its function is as follows. Bifunctional terpene synthase converts DMAPP and IPP, and also GGPP, into variediene as a single product. The C-terminal prenyltransferase domain of AbVS catalyzes formation of GGPP, whereas the N-terminal terpene cyclase domain catalyzes the cyclization of GGPP to variediene. In Aspergillus brasiliensis (strain CBS 101740 / IMI 381727 / IBT 21946), this protein is Variediene synthase.